The chain runs to 517 residues: E3 ubiquitin-protein ligase TRIM65 (517 aa).

A2 carries the N-acetylalanine modification. An RING-type zinc finger spans residues 12–51 (CAICLGLYQDPVTLPCGHNFCGACIRDWWDRCGKACPECR). The tract at residues 75 to 94 (AGPARDPGPDPGPGPDPAAR) is disordered. A B box-type zinc finger spans residues 90–137 (DPAARCPRHGRPLELFCRTEGRCVCSVCTVRECRLHERALLDAERLKR). Zn(2+) is bound by residues C95, H98, C117, and H125. Residues 139-227 (AQLRASLEVT…QRLRVHLEAV (89 aa)) are a coiled coil. S185 bears the Phosphoserine mark. K206 participates in a covalent cross-link: (Microbial infection) Glycyl lysine isopeptide (Lys-Gly) (interchain with G-Cter in ubiquitin). The B30.2/SPRY domain maps to 313–506 (APVPSTVCPL…LTLCHQPGAV (194 aa)).

It belongs to the TRIM/RBCC family. Homo-multimerizes. Interacts with ARRDC4.

The protein localises to the cytoplasm. It catalyses the reaction S-ubiquitinyl-[E2 ubiquitin-conjugating enzyme]-L-cysteine + [acceptor protein]-L-lysine = [E2 ubiquitin-conjugating enzyme]-L-cysteine + N(6)-ubiquitinyl-[acceptor protein]-L-lysine.. It participates in protein modification; protein ubiquitination. In terms of biological role, E3 ubiquitin ligase that plays a role in several processes including innate immnity, autophagy or inflammation. Negatively regulates miRNAs by modulating the ubiquitination and stability of TNRC6A, a protein involved in RNA-mediated gene silencing by both micro-RNAs (miRNAs) and short interfering RNAs. This ubiquitination results in the suppressed expression of miR-138-5p leading to increased autophagy. Upon enteroviral infection, promotes 'Lys-63'-mediated ubiquitination activation of IFIH1/MDA5 leading to innate signaling cascade. Mechanistically, selectively recognizes MDA5 filaments that occur on dsRNAs. Plays also a role in limitation of inflammation through different mechanisms. First, promotes 'Lys-48'-mediated ubiquitination of VCAM1 leading to its degradation and limitation of LPS-induced lung inflammation. In addition, negatively regulates inflammasome activation by promoting 'lys48'-linked ubiquitination of NLRP3 which is critical for the inhibition of NLRP3 inflammasome activation in resting macrophages. The polypeptide is E3 ubiquitin-protein ligase TRIM65 (TRIM65) (Homo sapiens (Human)).